Consider the following 381-residue polypeptide: Succinyl-diaminopimelate desuccinylase (381 aa).

His-69 is a binding site for Zn(2+). Asp-71 is an active-site residue. Asp-103 is a binding site for Zn(2+). Catalysis depends on Glu-137, which acts as the Proton acceptor. The Zn(2+) site is built by Glu-138, Glu-166, and His-355.

This sequence belongs to the peptidase M20A family. DapE subfamily. In terms of assembly, homodimer. It depends on Zn(2+) as a cofactor. The cofactor is Co(2+).

The catalysed reaction is N-succinyl-(2S,6S)-2,6-diaminopimelate + H2O = (2S,6S)-2,6-diaminopimelate + succinate. Its pathway is amino-acid biosynthesis; L-lysine biosynthesis via DAP pathway; LL-2,6-diaminopimelate from (S)-tetrahydrodipicolinate (succinylase route): step 3/3. In terms of biological role, catalyzes the hydrolysis of N-succinyl-L,L-diaminopimelic acid (SDAP), forming succinate and LL-2,6-diaminopimelate (DAP), an intermediate involved in the bacterial biosynthesis of lysine and meso-diaminopimelic acid, an essential component of bacterial cell walls. The sequence is that of Succinyl-diaminopimelate desuccinylase from Rickettsia africae (strain ESF-5).